The following is a 237-amino-acid chain: DCN1-like protein 5 (237 aa).

Ser-9, Ser-41, and Ser-48 each carry phosphoserine. Residues 46 to 232 (FSSKKCLAWF…LLDEFVEWQK (187 aa)) form the DCUN1 domain.

In terms of assembly, part of a complex that contains DCUN1D5, CUL1 and RBX1; this interaction is bridged by CUL1. Interacts (via the DCUN1 domain) with the unneddylated cullins: interacts with CUL1, CUL2, CUL3, CUL4A, CUL4B and CUL5; these interactions promote the cullin neddylation and the identity of the cullin dictates the affinity of the interaction. Interacts (via DCUN1 domain) with UBE2M (N-terminally acetylated form) and probably with UBE2F (N-terminally acetylated form). May also interact with regulators or subunits of cullin-RING ligases such as RBX1, RNF7, ELOB and DDB1; these interactions are bridged by cullins. Interacts with CAND1; this interaction is bridged by cullins and strongly inhibits the neddylation of cullins. These CAND-cullin-DCNL complexes can only be neddylated in the presence of a substrate adapter. In terms of processing, phosphorylation at Ser-41 is independent of cullin's interaction. Phosphorylated in response to both TICAM1 and MYD88 dependent Toll-like receptor (TLR) pathway activation. Phosphorylated in response to IL1B stimulation. As to expression, weakly expressed in testis, skin and immune tissues (thymus, spleen and lymph nodes).

Its subcellular location is the nucleus. The protein localises to the cytoplasm. The protein resides in the cytoskeleton. It is found in the spindle. Contributes to the neddylation of all cullins by transferring NEDD8 from N-terminally acetylated NEDD8-conjugating E2s enzyme to different cullin C-terminal domain-RBX complexes which is necessary for the activation of cullin-RING E3 ubiquitin ligases (CRLs). May play a role in DNA damage response and may participate in cell proliferation and anchorage-independent cell growth. This is DCN1-like protein 5 from Homo sapiens (Human).